Reading from the N-terminus, the 754-residue chain is Endothelin-converting enzyme 1 (754 aa).

The Cytoplasmic segment spans residues 1–52 (MMSTYKRATLDEEDLVDSLSEGEVYPNGLQVNFRNFRSSQRCWATRTQVEKR). Phosphothreonine is present on Thr-9. Residues 53–73 (LIVLVALLAAGLVACLTALGI) traverse the membrane as a helical; Signal-anchor for type II membrane protein segment. At 74 to 754 (QYRTRTPPVC…MNPRHKCEVW (681 aa)) the chain is on the extracellular side. A Peptidase M13 domain is found at 82 to 754 (VCLSEACVSV…MNPRHKCEVW (673 aa)). 5 disulfides stabilise this stretch: Cys-83-Cys-88, Cys-106-Cys-739, Cys-114-Cys-699, Cys-169-Cys-419, and Cys-628-Cys-751. Asn-150, Asn-171, Asn-194, Asn-254, Asn-300, Asn-346, Asn-367, and Asn-523 each carry an N-linked (GlcNAc...) asparagine glycan. Zn(2+) is bound at residue His-591. Residue Glu-592 is part of the active site. A Zn(2+)-binding site is contributed by His-595. 2 N-linked (GlcNAc...) asparagine glycosylation sites follow: Asn-616 and Asn-635. Glu-651 contributes to the Zn(2+) binding site. Residue Asp-655 is the Proton donor of the active site.

Belongs to the peptidase M13 family. Homodimer; disulfide-linked. Interacts with PPP1R16B. Interacts with TSPAN8; this interaction recruits the endothelin converting enzyme ECE1 to tetraspanin-enriched microdomains and positively modulates its enzymatic activity. It depends on Zn(2+) as a cofactor.

The protein localises to the cell membrane. The catalysed reaction is Hydrolysis of the 21-Trp-|-Val-22 bond in big endothelin to form endothelin 1.. With respect to regulation, inhibited by phosphoramidon. Its function is as follows. Converts big endothelin-1 to endothelin-1. The sequence is that of Endothelin-converting enzyme 1 (ECE1) from Cavia porcellus (Guinea pig).